A 171-amino-acid chain; its full sequence is MERAIPGNDTREPAYGERWNGGPGGSTSPFQLPDESPSWTEWRLHYDETNSNQDNPLGFKESWGFGKVVFKRYLRYDGTETSLHRVLGSWTGDSVNYAASRFFGFDQIGCTYSIRFRGVSVTISGGSRTLQHLSEMAIRSKQELLQLTPVQVESDVSRGRPECQTFKEESE.

The span at 1-15 (MERAIPGNDTREPAY) shows a compositional bias: basic and acidic residues. The disordered stretch occupies residues 1–32 (MERAIPGNDTREPAYGERWNGGPGGSTSPFQL).

The protein belongs to the tombusvirus protein p19 family. In terms of assembly, homodimer.

Viral suppressor of RNA silencing which binds specifically to silencing RNAs (siRNAs). Acts as a molecular caliper to specifically select siRNAs based on the length of the duplex region of the RNA. This chain is RNA silencing suppressor p19, found in Capsicum annuum (Capsicum pepper).